Consider the following 168-residue polypeptide: uncharacterized protein (168 aa).

It localises to the mitochondrion. This is an uncharacterized protein from Marchantia polymorpha (Common liverwort).